A 269-amino-acid polypeptide reads, in one-letter code: 4-hydroxy-tetrahydrodipicolinate reductase (269 aa).

NAD(+) is bound by residues 8 to 13 (GAAGRM) and E34. An NADP(+)-binding site is contributed by R35. Residues 98–100 (GTT) and 122–125 (APNY) contribute to the NAD(+) site. H155 functions as the Proton donor/acceptor in the catalytic mechanism. H156 lines the (S)-2,3,4,5-tetrahydrodipicolinate pocket. K159 serves as the catalytic Proton donor. 165-166 (GT) contributes to the (S)-2,3,4,5-tetrahydrodipicolinate binding site.

It belongs to the DapB family.

The protein localises to the cytoplasm. It carries out the reaction (S)-2,3,4,5-tetrahydrodipicolinate + NAD(+) + H2O = (2S,4S)-4-hydroxy-2,3,4,5-tetrahydrodipicolinate + NADH + H(+). It catalyses the reaction (S)-2,3,4,5-tetrahydrodipicolinate + NADP(+) + H2O = (2S,4S)-4-hydroxy-2,3,4,5-tetrahydrodipicolinate + NADPH + H(+). The protein operates within amino-acid biosynthesis; L-lysine biosynthesis via DAP pathway; (S)-tetrahydrodipicolinate from L-aspartate: step 4/4. Catalyzes the conversion of 4-hydroxy-tetrahydrodipicolinate (HTPA) to tetrahydrodipicolinate. The polypeptide is 4-hydroxy-tetrahydrodipicolinate reductase (Vibrio parahaemolyticus serotype O3:K6 (strain RIMD 2210633)).